A 354-amino-acid chain; its full sequence is tRNA N6-adenosine threonylcarbamoyltransferase (354 aa).

Positions 111 and 115 each coordinate Fe cation. Substrate contacts are provided by residues 134–138 (LVSGG), aspartate 167, glycine 180, and asparagine 279. Residue aspartate 319 coordinates Fe cation.

Belongs to the KAE1 / TsaD family. Fe(2+) serves as cofactor.

It localises to the cytoplasm. It carries out the reaction L-threonylcarbamoyladenylate + adenosine(37) in tRNA = N(6)-L-threonylcarbamoyladenosine(37) in tRNA + AMP + H(+). Its function is as follows. Required for the formation of a threonylcarbamoyl group on adenosine at position 37 (t(6)A37) in tRNAs that read codons beginning with adenine. Is involved in the transfer of the threonylcarbamoyl moiety of threonylcarbamoyl-AMP (TC-AMP) to the N6 group of A37, together with TsaE and TsaB. TsaD likely plays a direct catalytic role in this reaction. The protein is tRNA N6-adenosine threonylcarbamoyltransferase of Neisseria meningitidis serogroup C / serotype 2a (strain ATCC 700532 / DSM 15464 / FAM18).